A 572-amino-acid polypeptide reads, in one-letter code: MSVDQAVLNRIWSETILTELNRFGVNHVCIAPGSRSTPLTVEAADNPNFTIHTHFDERGLGFMALGLAKASKEPVALIVTSGTAVANLLPAIAEAKLTGEKLVVLTADRPVELVGCGANQAINQLGIFAEHVSDSLNLPSPTLSTPLNWLLTSVDEVMFTQRLRGSAVHINCAFPEPLYSNTDKSTYQGYLDTVAGWRDSKVTYCQRFNPKTSSAIPSCGDNKGLVVIGSLPLIQAQAARTFAEQMGWPVLADPQSGVSSDWAHFDLWLQNPRMASQLDDCDLIVQFGSRIISKRFNHWLEKHVSRNQQGGDTQYWFVSPRLDRDNQSHLPQWHWAEQPSAWVERTSGFSSEHAGWADKLAADIKQVTQHAKGLFISDPKSELSEIALAIDVAERAQGVDLFVGNSLFVRLIDMFGKLDNTEVFTNRGASGIDGLFATASGVQRARNNPMLMFIGDTSALYGLNSLALFTHSELPSVLVIANNDGGAIFDLLPVPQEHRESFYQMPHGYEFEHAAKQFGLQYRKPSSLAEYQSLVSEHFASGQGALVVEVQTPSNQAVEHLKSFDKNLHALF.

Belongs to the TPP enzyme family. MenD subfamily. In terms of assembly, homodimer. Mg(2+) is required as a cofactor. Mn(2+) serves as cofactor. It depends on thiamine diphosphate as a cofactor.

The catalysed reaction is isochorismate + 2-oxoglutarate + H(+) = 5-enolpyruvoyl-6-hydroxy-2-succinyl-cyclohex-3-ene-1-carboxylate + CO2. The protein operates within quinol/quinone metabolism; 1,4-dihydroxy-2-naphthoate biosynthesis; 1,4-dihydroxy-2-naphthoate from chorismate: step 2/7. It functions in the pathway quinol/quinone metabolism; menaquinone biosynthesis. Functionally, catalyzes the thiamine diphosphate-dependent decarboxylation of 2-oxoglutarate and the subsequent addition of the resulting succinic semialdehyde-thiamine pyrophosphate anion to isochorismate to yield 2-succinyl-5-enolpyruvyl-6-hydroxy-3-cyclohexene-1-carboxylate (SEPHCHC). This is 2-succinyl-5-enolpyruvyl-6-hydroxy-3-cyclohexene-1-carboxylate synthase from Vibrio campbellii (strain ATCC BAA-1116).